The primary structure comprises 438 residues: Enolase (438 aa).

Glutamine 163 serves as a coordination point for (2R)-2-phosphoglycerate. Glutamate 205 serves as the catalytic Proton donor. Mg(2+) is bound by residues aspartate 243, glutamate 292, and aspartate 319. 4 residues coordinate (2R)-2-phosphoglycerate: lysine 344, arginine 373, serine 374, and lysine 395. The active-site Proton acceptor is lysine 344.

This sequence belongs to the enolase family. Requires Mg(2+) as cofactor.

The protein resides in the cytoplasm. It localises to the secreted. It is found in the cell surface. The enzyme catalyses (2R)-2-phosphoglycerate = phosphoenolpyruvate + H2O. It functions in the pathway carbohydrate degradation; glycolysis; pyruvate from D-glyceraldehyde 3-phosphate: step 4/5. In terms of biological role, catalyzes the reversible conversion of 2-phosphoglycerate (2-PG) into phosphoenolpyruvate (PEP). It is essential for the degradation of carbohydrates via glycolysis. The protein is Enolase of Streptococcus agalactiae.